We begin with the raw amino-acid sequence, 483 residues long: Proline--tRNA ligase (483 aa).

The protein belongs to the class-II aminoacyl-tRNA synthetase family. ProS type 3 subfamily. Homodimer.

The protein resides in the cytoplasm. The catalysed reaction is tRNA(Pro) + L-proline + ATP = L-prolyl-tRNA(Pro) + AMP + diphosphate. Functionally, catalyzes the attachment of proline to tRNA(Pro) in a two-step reaction: proline is first activated by ATP to form Pro-AMP and then transferred to the acceptor end of tRNA(Pro). This is Proline--tRNA ligase from Natranaerobius thermophilus (strain ATCC BAA-1301 / DSM 18059 / JW/NM-WN-LF).